The chain runs to 464 residues: ATP-dependent protease ATPase subunit HslU (464 aa).

ATP-binding positions include Val19, 61–66 (GVGKTE), Asp278, Glu342, and Arg414.

Belongs to the ClpX chaperone family. HslU subfamily. In terms of assembly, a double ring-shaped homohexamer of HslV is capped on each side by a ring-shaped HslU homohexamer. The assembly of the HslU/HslV complex is dependent on binding of ATP.

It localises to the cytoplasm. Functionally, ATPase subunit of a proteasome-like degradation complex; this subunit has chaperone activity. The binding of ATP and its subsequent hydrolysis by HslU are essential for unfolding of protein substrates subsequently hydrolyzed by HslV. HslU recognizes the N-terminal part of its protein substrates and unfolds these before they are guided to HslV for hydrolysis. This is ATP-dependent protease ATPase subunit HslU from Halalkalibacterium halodurans (strain ATCC BAA-125 / DSM 18197 / FERM 7344 / JCM 9153 / C-125) (Bacillus halodurans).